A 295-amino-acid polypeptide reads, in one-letter code: ATP synthase gamma chain (295 aa).

It belongs to the ATPase gamma chain family. In terms of assembly, F-type ATPases have 2 components, CF(1) - the catalytic core - and CF(0) - the membrane proton channel. CF(1) has five subunits: alpha(3), beta(3), gamma(1), delta(1), epsilon(1). CF(0) has three main subunits: a, b and c.

It is found in the cell inner membrane. Its function is as follows. Produces ATP from ADP in the presence of a proton gradient across the membrane. The gamma chain is believed to be important in regulating ATPase activity and the flow of protons through the CF(0) complex. This Cytophaga hutchinsonii (strain ATCC 33406 / DSM 1761 / CIP 103989 / NBRC 15051 / NCIMB 9469 / D465) protein is ATP synthase gamma chain.